A 501-amino-acid polypeptide reads, in one-letter code: Rhazimal synthase (501 aa).

Residues 4–24 (MQLSFASAVVYSLIFFVFLLV) form a helical membrane-spanning segment. Residue N282 is glycosylated (N-linked (GlcNAc...) asparagine). Position 442 (C442) interacts with heme.

It belongs to the cytochrome P450 family. Heme serves as cofactor.

The protein resides in the membrane. The catalysed reaction is (19E)-geissoschizine + reduced [NADPH--hemoprotein reductase] + O2 = rhazimal + oxidized [NADPH--hemoprotein reductase] + 2 H2O + H(+). The enzyme catalyses (19E)-geissoschizine + reduced [NADPH--hemoprotein reductase] + O2 = akuammicine + formate + oxidized [NADPH--hemoprotein reductase] + H2O + H(+). Its pathway is alkaloid biosynthesis. Its function is as follows. A cytochrome P450 monooxygenase involved in the biosynthesis of akuammilan monoterpene indole alkaloids (MIAs) natural products, components with various biological properties such as antidiabetic, antibacterial, anti-inflammatory, anticancer, and antimalarial activities. Catalyzes the conversion of geissoschizine to rhazimal. Can also, with lower efficiency, support the conversion of geissoschizine to akuammicine. This chain is Rhazimal synthase, found in Alstonia scholaris (Dogbane).